Consider the following 194-residue polypeptide: Thymidine kinase (194 aa).

Residues 15 to 22 (GSMFSGKS) and 88 to 91 (DEVQ) each bind ATP. Residue Glu-89 is the Proton acceptor of the active site. Positions 145, 148, 183, and 186 each coordinate Zn(2+).

This sequence belongs to the thymidine kinase family. In terms of assembly, homotetramer.

Its subcellular location is the cytoplasm. The catalysed reaction is thymidine + ATP = dTMP + ADP + H(+). This chain is Thymidine kinase, found in Bacillus anthracis (strain A0248).